A 211-amino-acid polypeptide reads, in one-letter code: Large ribosomal subunit protein eL13 (211 aa).

Lysine 16 is modified (N6-acetyllysine). Residues serine 52, serine 77, and serine 106 each carry the phosphoserine modification. Glycyl lysine isopeptide (Lys-Gly) (interchain with G-Cter in SUMO2) cross-links involve residues lysine 123 and lysine 145. A Glycyl lysine isopeptide (Lys-Gly) (interchain with G-Cter in SUMO1); alternate cross-link involves residue lysine 174. Residues lysine 174 and lysine 177 each participate in a glycyl lysine isopeptide (Lys-Gly) (interchain with G-Cter in SUMO2); alternate cross-link. Lysine 177 carries the N6-acetyllysine; alternate modification.

The protein belongs to the eukaryotic ribosomal protein eL13 family. Component of the large ribosomal subunit.

Its subcellular location is the cytoplasm. Functionally, component of the large ribosomal subunit. The ribosome is a large ribonucleoprotein complex responsible for the synthesis of proteins in the cell. In Mus musculus (Mouse), this protein is Large ribosomal subunit protein eL13 (Rpl13).